Here is an 865-residue protein sequence, read N- to C-terminus: Probable alpha/beta-glucosidase ARB_02101 (865 aa).

Positions 1 to 21 are cleaved as a signal peptide; sequence MFGRTLALAAVFATTVLSAAA. Asparagine 101 and asparagine 299 each carry an N-linked (GlcNAc...) asparagine glycan. Aspartate 428 acts as the Nucleophile in catalysis. Residue glutamate 431 is part of the active site. A glycan (N-linked (GlcNAc...) asparagine) is linked at asparagine 515. The Proton donor role is filled by aspartate 548. N-linked (GlcNAc...) asparagine glycosylation is found at asparagine 549, asparagine 585, and asparagine 748.

It belongs to the glycosyl hydrolase 31 family.

The protein localises to the secreted. The enzyme catalyses Hydrolysis of terminal, non-reducing (1-&gt;4)-linked alpha-D-glucose residues with release of alpha-D-glucose.. It carries out the reaction Hydrolysis of terminal, non-reducing beta-D-glucosyl residues with release of beta-D-glucose.. Glucosidase involved in the degradation of cellulosic biomass. Has both alpha- and beta-glucosidase activity. This is Probable alpha/beta-glucosidase ARB_02101 from Arthroderma benhamiae (strain ATCC MYA-4681 / CBS 112371) (Trichophyton mentagrophytes).